Consider the following 445-residue polypeptide: MKKYSICIVGGGSRYTPDMLAMLCNQKERFPLRKIVLYDNESERQETVGNYAKILFKEYYPELEEVIWTTDEKEAFEDIDFALMQIRAGRLKMREKDEKISLKHGCLGQETCGAGGFAYGLRSVPAVIDLIKSIRTYSPKCWILNYSNPAAIVAEATKRVFPNDYRIINICDMPIAIMDIYAAVLGLKRRDLEPKYFGLNHFGWFTHILDKKTGENYLPKLREILKTPVDVQTEPLFQEKSWKSTFEFMSQMINDYDEYLPNTYLQYYLYPAKMRNKENPEYTRANEVMDGNEKETYERMHKIISLGKIHGTKYELTSDVGCHAEYIVDLATAIANNTNEIFLIITENKGTINNVSKDMMVEVPCRVGSNGVEPLVVGSIPAFYKGLMENQYAYEKLSVDACLEGSYQKALQALVLNRTVVNTDVAKELLKDLIEANKGYWNELH.

An NAD(+)-binding site is contributed by 4 to 71 (YSICIVGGGS…ELEEVIWTTD (68 aa)). Substrate is bound by residues R94 and N148. Position 171 (C171) interacts with Mn(2+). The Proton donor role is filled by D172. Mn(2+) is bound at residue H201. Y264 serves as the catalytic Proton acceptor. Position 284 (R284) interacts with substrate.

Belongs to the glycosyl hydrolase 4 family. As to quaternary structure, homotetramer. The cofactor is NAD(+). Requires Mn(2+) as cofactor.

In terms of biological role, phospho-alpha-glucosidase that catalyzes the hydrolysis of p-nitrophenyl-alpha-D-glucopyranoside 6-phosphate, but is not able to cleave 'natural' phospho-alpha-glucosides produced via the phosphoenolpyruvate-dependent sugar phosphotransferase system (PEP-PTS). The polypeptide is Phospho-alpha-glucosidase PagL (pagL) (Clostridium acetobutylicum (strain ATCC 824 / DSM 792 / JCM 1419 / IAM 19013 / LMG 5710 / NBRC 13948 / NRRL B-527 / VKM B-1787 / 2291 / W)).